Consider the following 204-residue polypeptide: Probable carboxysome shell protein CsoS1E (204 aa).

3 stretches are compositionally biased toward low complexity: residues 1-14, 41-84, and 92-102; these read MPKP…DSPS, SAST…AAGS, and GGAIKPPASSS. Residues 1 to 102 are disordered; the sequence is MPKPSSSSSS…GAIKPPASSS (102 aa). In terms of domain architecture, BMC spans 111–196; it reads ALGMIETRGM…PHQEVEPALR (86 aa).

Belongs to the bacterial microcompartments protein family. Homohexamer.

It is found in the carboxysome. A probable carboxysomal shell protein found only in Prochlorococcus and Synechococcus strains that grow in low light. The sequence is that of Probable carboxysome shell protein CsoS1E from Prochlorococcus marinus (strain MIT 9313).